A 469-amino-acid chain; its full sequence is Glutamate--tRNA ligase 2 (469 aa).

A 'HIGH' region motif is present at residues 8 to 18 (PSPTGFLHVGG). Positions 250–254 (KLSKR) match the 'KMSKS' region motif. ATP is bound at residue K253.

Belongs to the class-I aminoacyl-tRNA synthetase family. Glutamate--tRNA ligase type 1 subfamily. In terms of assembly, monomer.

It is found in the cytoplasm. The enzyme catalyses tRNA(Glu) + L-glutamate + ATP = L-glutamyl-tRNA(Glu) + AMP + diphosphate. Functionally, catalyzes the attachment of glutamate to tRNA(Glu) in a two-step reaction: glutamate is first activated by ATP to form Glu-AMP and then transferred to the acceptor end of tRNA(Glu). The polypeptide is Glutamate--tRNA ligase 2 (Thermotoga sp. (strain RQ2)).